Here is a 379-residue protein sequence, read N- to C-terminus: Cytochrome b (379 aa).

The next 4 membrane-spanning stretches (helical) occupy residues Phe-33–Met-53, Trp-77–Val-98, Trp-113–Leu-133, and Phe-178–Leu-198. Heme b-binding residues include His-83 and His-97. Residues His-182 and His-196 each contribute to the heme b site. His-201 contacts a ubiquinone. Helical transmembrane passes span Thr-226–Tyr-246, Leu-288–Gln-308, Leu-320–Gly-340, and Phe-347–Pro-367.

The protein belongs to the cytochrome b family. As to quaternary structure, the cytochrome bc1 complex contains 11 subunits: 3 respiratory subunits (MT-CYB, CYC1 and UQCRFS1), 2 core proteins (UQCRC1 and UQCRC2) and 6 low-molecular weight proteins (UQCRH/QCR6, UQCRB/QCR7, UQCRQ/QCR8, UQCR10/QCR9, UQCR11/QCR10 and a cleavage product of UQCRFS1). This cytochrome bc1 complex then forms a dimer. Heme b is required as a cofactor.

It is found in the mitochondrion inner membrane. Functionally, component of the ubiquinol-cytochrome c reductase complex (complex III or cytochrome b-c1 complex) that is part of the mitochondrial respiratory chain. The b-c1 complex mediates electron transfer from ubiquinol to cytochrome c. Contributes to the generation of a proton gradient across the mitochondrial membrane that is then used for ATP synthesis. This chain is Cytochrome b (MT-CYB), found in Lepilemur ankaranensis (Ankarana sportive lemur).